Here is a 481-residue protein sequence, read N- to C-terminus: Aspartyl/glutamyl-tRNA(Asn/Gln) amidotransferase subunit B (481 aa).

The protein belongs to the GatB/GatE family. GatB subfamily. As to quaternary structure, heterotrimer of A, B and C subunits.

It carries out the reaction L-glutamyl-tRNA(Gln) + L-glutamine + ATP + H2O = L-glutaminyl-tRNA(Gln) + L-glutamate + ADP + phosphate + H(+). It catalyses the reaction L-aspartyl-tRNA(Asn) + L-glutamine + ATP + H2O = L-asparaginyl-tRNA(Asn) + L-glutamate + ADP + phosphate + 2 H(+). Allows the formation of correctly charged Asn-tRNA(Asn) or Gln-tRNA(Gln) through the transamidation of misacylated Asp-tRNA(Asn) or Glu-tRNA(Gln) in organisms which lack either or both of asparaginyl-tRNA or glutaminyl-tRNA synthetases. The reaction takes place in the presence of glutamine and ATP through an activated phospho-Asp-tRNA(Asn) or phospho-Glu-tRNA(Gln). This is Aspartyl/glutamyl-tRNA(Asn/Gln) amidotransferase subunit B from Pseudomonas putida (strain ATCC 700007 / DSM 6899 / JCM 31910 / BCRC 17059 / LMG 24140 / F1).